The primary structure comprises 118 residues: MASLILGAPPRVTVALPSSRLSSSHSETAGVSLSCFTHQFSLSTSSSSSIPLVYCGRGDRKTAKGKRFNHSFGNARPRNKSKGRGPERVPVPPAPPRKDKFENDEKIKIDIDESLFSN.

Residues 1-55 constitute a chloroplast transit peptide; sequence MASLILGAPPRVTVALPSSRLSSSHSETAGVSLSCFTHQFSLSTSSSSSIPLVYC. The interval 61-118 is disordered; sequence KTAKGKRFNHSFGNARPRNKSKGRGPERVPVPPAPPRKDKFENDEKIKIDIDESLFSN. Basic and acidic residues predominate over residues 96–111; it reads PRKDKFENDEKIKIDI. Serine 117 is subject to Phosphoserine.

This sequence belongs to the bacterial ribosomal protein bTHX family. As to quaternary structure, part of the 30S ribosomal subunit.

It localises to the plastid. The protein localises to the chloroplast. The sequence is that of Small ribosomal subunit protein bTHXc (RPS31) from Arabidopsis thaliana (Mouse-ear cress).